Reading from the N-terminus, the 701-residue chain is Polyphosphate kinase (701 aa).

Position 45 (Asn-45) interacts with ATP. Mg(2+) contacts are provided by Arg-373 and Arg-403. Residues 428 to 462 form the PLD phosphodiesterase 1 domain; that stretch reads PGMKIHAKLLLITRKEGDEFVRYAHIGTGNFHERT. His-433 acts as the Phosphohistidine intermediate in catalysis. Positions 466, 562, and 590 each coordinate ATP. The PLD phosphodiesterase 2 domain maps to 585-615; that stretch reads DRFLEHPRVLVVHNDGNPQVFISSADWMERN.

It belongs to the polyphosphate kinase 1 (PPK1) family. It depends on Mg(2+) as a cofactor. Post-translationally, an intermediate of this reaction is the autophosphorylated ppk in which a phosphate is covalently linked to a histidine residue through a N-P bond.

It catalyses the reaction [phosphate](n) + ATP = [phosphate](n+1) + ADP. In terms of biological role, catalyzes the reversible transfer of the terminal phosphate of ATP to form a long-chain polyphosphate (polyP). In Vibrio cholerae serotype O1 (strain ATCC 39315 / El Tor Inaba N16961), this protein is Polyphosphate kinase.